Consider the following 73-residue polypeptide: Translation initiation factor IF-1 (73 aa).

Residues 1–73 (MAKKDGAIEV…TRGRIVYRYK (73 aa)) form the S1-like domain.

It belongs to the IF-1 family. Component of the 30S ribosomal translation pre-initiation complex which assembles on the 30S ribosome in the order IF-2 and IF-3, IF-1 and N-formylmethionyl-tRNA(fMet); mRNA recruitment can occur at any time during PIC assembly.

It is found in the cytoplasm. One of the essential components for the initiation of protein synthesis. Stabilizes the binding of IF-2 and IF-3 on the 30S subunit to which N-formylmethionyl-tRNA(fMet) subsequently binds. Helps modulate mRNA selection, yielding the 30S pre-initiation complex (PIC). Upon addition of the 50S ribosomal subunit IF-1, IF-2 and IF-3 are released leaving the mature 70S translation initiation complex. This chain is Translation initiation factor IF-1, found in Mycolicibacterium gilvum (strain PYR-GCK) (Mycobacterium gilvum (strain PYR-GCK)).